Consider the following 129-residue polypeptide: MPTYNQLVRFGRKSKTRKTKSPALESNPFKSGVCLVVKTVTPKKPNSALRKIATVRLSNKRTVNAYIPGEKHSVKEHDRVLVRGGQVPDLPGVKYHIVLGAYDIAGVKGRKQGRSRYGAHRKQVAATKK.

Residues 110-129 (RKQGRSRYGAHRKQVAATKK) form a disordered region.

This sequence belongs to the universal ribosomal protein uS12 family. Part of the 30S ribosomal subunit. Contacts proteins S8 and S17. May interact with IF1 in the 30S initiation complex.

In terms of biological role, with S4 and S5 plays an important role in translational accuracy. Interacts with and stabilizes bases of the 16S rRNA that are involved in tRNA selection in the A site and with the mRNA backbone. Located at the interface of the 30S and 50S subunits, it traverses the body of the 30S subunit contacting proteins on the other side and probably holding the rRNA structure together. The combined cluster of proteins S8, S12 and S17 appears to hold together the shoulder and platform of the 30S subunit. The sequence is that of Small ribosomal subunit protein uS12 from Rickettsia prowazekii (strain Madrid E).